A 303-amino-acid chain; its full sequence is Recombination-associated protein RdgC (303 aa).

Belongs to the RdgC family.

It localises to the cytoplasm. Its subcellular location is the nucleoid. Its function is as follows. May be involved in recombination. The chain is Recombination-associated protein RdgC from Shewanella piezotolerans (strain WP3 / JCM 13877).